Here is a 317-residue protein sequence, read N- to C-terminus: Signal recognition particle receptor FtsY (317 aa).

GTP is bound by residues 117 to 124 (GVNGVGKT), 199 to 203 (DTAGR), and 263 to 266 (TKLD).

The protein belongs to the GTP-binding SRP family. FtsY subfamily. Part of the signal recognition particle protein translocation system, which is composed of SRP and FtsY.

The protein localises to the cell membrane. It localises to the cytoplasm. It carries out the reaction GTP + H2O = GDP + phosphate + H(+). Functionally, involved in targeting and insertion of nascent membrane proteins into the cytoplasmic membrane. Acts as a receptor for the complex formed by the signal recognition particle (SRP) and the ribosome-nascent chain (RNC). The protein is Signal recognition particle receptor FtsY of Deinococcus radiodurans (strain ATCC 13939 / DSM 20539 / JCM 16871 / CCUG 27074 / LMG 4051 / NBRC 15346 / NCIMB 9279 / VKM B-1422 / R1).